The following is a 344-amino-acid chain: Serine/threonine-protein kinase ppk13 (344 aa).

Residues 38–46 (LGEGGFAFV) and K61 each bind ATP. In terms of domain architecture, Protein kinase spans 76–344 (MKEADYHRKF…LSKIDLQINQ (269 aa)). H192 functions as the Proton acceptor in the catalytic mechanism.

This sequence belongs to the protein kinase superfamily. Ser/Thr protein kinase family.

Its subcellular location is the endoplasmic reticulum. The protein resides in the golgi apparatus. The catalysed reaction is L-seryl-[protein] + ATP = O-phospho-L-seryl-[protein] + ADP + H(+). The enzyme catalyses L-threonyl-[protein] + ATP = O-phospho-L-threonyl-[protein] + ADP + H(+). This is Serine/threonine-protein kinase ppk13 (ppk13) from Schizosaccharomyces pombe (strain 972 / ATCC 24843) (Fission yeast).